Consider the following 152-residue polypeptide: Small ribosomal subunit protein uS15 (152 aa).

Residues 1-16 (MARIHARRRGKSGSKR) are compositionally biased toward basic residues. Residues 1–21 (MARIHARRRGKSGSKRIYRDS) form a disordered region.

Belongs to the universal ribosomal protein uS15 family. As to quaternary structure, part of the 30S ribosomal subunit.

This is Small ribosomal subunit protein uS15 from Archaeoglobus fulgidus (strain ATCC 49558 / DSM 4304 / JCM 9628 / NBRC 100126 / VC-16).